A 417-amino-acid polypeptide reads, in one-letter code: D-amino acid dehydrogenase (417 aa).

3 to 17 is a binding site for FAD; the sequence is VVILGSGVIGVTSAW.

This sequence belongs to the DadA oxidoreductase family. FAD serves as cofactor.

The enzyme catalyses a D-alpha-amino acid + A + H2O = a 2-oxocarboxylate + AH2 + NH4(+). It functions in the pathway amino-acid degradation; D-alanine degradation; NH(3) and pyruvate from D-alanine: step 1/1. Oxidative deamination of D-amino acids. The chain is D-amino acid dehydrogenase from Edwardsiella ictaluri (strain 93-146).